Here is a 472-residue protein sequence, read N- to C-terminus: Zinc finger CCCH domain-containing protein 59 (472 aa).

The interval 87-139 is disordered; the sequence is YKSPEGNRPRQNAANGSAKPQVIGTGHRVSNQPRKNAVYGPRSSSLSDTRGCG. The C3H1-type zinc-finger motif lies at 145–172; sequence SPKKSVCNFWKDGNCKKGEKCQFLHSWS. 5 WD repeats span residues 185–226, 261–301, 310–347, 350–387, and 436–472; these read GHKN…RSIN, HLEG…SDPF, HHSG…CRMT, QHIG…SLKV, and FSTQ…GTKV.

The protein is Zinc finger CCCH domain-containing protein 59 (ZFWD3) of Arabidopsis thaliana (Mouse-ear cress).